The following is a 513-amino-acid chain: Zinc finger CCCH-type with G patch domain-containing protein (513 aa).

Residues 155 to 178 form a C3H1-type zinc finger; it reads PCSYYLEGECRFDEAKCRFSHGAL. Acidic residues predominate over residues 252-261; sequence DQDEDDELSS. Residues 252 to 283 form a disordered region; that stretch reads DQDEDDELSSEESNSSMNDNSSDEAESDMDDL. Positions 262–271 are enriched in low complexity; that stretch reads EESNSSMNDN. The segment covering 272-283 has biased composition (acidic residues); the sequence is SSDEAESDMDDL. The 47-residue stretch at 312–358 folds into the G-patch domain; it reads TRGIGSKLMEKMGYIHGTGLGSDGRGIVTPVSAQILPQGRSLDACME. Residues 478 to 495 show a composition bias toward polar residues; sequence VQMQSHKQELATLQAQER. Positions 478–513 are disordered; sequence VQMQSHKQELATLQAQERSLSKEQQTRKSKNKMFEF. Residues 496-513 show a composition bias toward basic and acidic residues; sequence SLSKEQQTRKSKNKMFEF.

It is found in the nucleus. Its function is as follows. Transcription repressor. The sequence is that of Zinc finger CCCH-type with G patch domain-containing protein from Drosophila melanogaster (Fruit fly).